Reading from the N-terminus, the 550-residue chain is Glucose-6-phosphate isomerase (550 aa).

D-glucose 6-phosphate-binding positions include 164–165 (GS), 215–220 (SKTFTT), glutamine 359, glutamate 363, and histidine 394. Glutamate 363 functions as the Proton donor in the catalytic mechanism. Histidine 394 is a catalytic residue. Threonine 455 is subject to Phosphothreonine. D-glucose 6-phosphate is bound at residue lysine 516. Lysine 516 is a catalytic residue.

Belongs to the GPI family. In terms of assembly, homodimer.

The protein localises to the cytoplasm. It localises to the cytosol. It catalyses the reaction alpha-D-glucose 6-phosphate = beta-D-fructose 6-phosphate. It participates in carbohydrate degradation; glycolysis; D-glyceraldehyde 3-phosphate and glycerone phosphate from D-glucose: step 2/4. In terms of biological role, in the cytoplasm, catalyzes the conversion of glucose-6-phosphate to fructose-6-phosphate, the second step in glycolysis, and the reverse reaction during gluconeogenesis. This Schizosaccharomyces pombe (strain 972 / ATCC 24843) (Fission yeast) protein is Glucose-6-phosphate isomerase (pgi1).